Consider the following 228-residue polypeptide: Urease accessory protein UreF 1 (228 aa).

The protein belongs to the UreF family. As to quaternary structure, ureD, UreF and UreG form a complex that acts as a GTP-hydrolysis-dependent molecular chaperone, activating the urease apoprotein by helping to assemble the nickel containing metallocenter of UreC. The UreE protein probably delivers the nickel.

The protein localises to the cytoplasm. Its function is as follows. Required for maturation of urease via the functional incorporation of the urease nickel metallocenter. The chain is Urease accessory protein UreF 1 from Brucella anthropi (strain ATCC 49188 / DSM 6882 / CCUG 24695 / JCM 21032 / LMG 3331 / NBRC 15819 / NCTC 12168 / Alc 37) (Ochrobactrum anthropi).